A 149-amino-acid polypeptide reads, in one-letter code: Golgi apparatus membrane protein tvp-18 (149 aa).

N-linked (GlcNAc...) asparagine glycosylation is present at asparagine 11. Helical transmembrane passes span tryptophan 18–phenylalanine 38, isoleucine 41–valine 61, asparagine 84–isoleucine 103, and serine 108–leucine 128.

This sequence belongs to the TVP18 family.

The protein localises to the golgi apparatus membrane. Its function is as follows. Golgi membrane protein involved in vesicular trafficking. The polypeptide is Golgi apparatus membrane protein tvp-18 (tvp-18) (Neurospora crassa (strain ATCC 24698 / 74-OR23-1A / CBS 708.71 / DSM 1257 / FGSC 987)).